A 96-amino-acid polypeptide reads, in one-letter code: Co-chaperonin GroES (96 aa).

This sequence belongs to the GroES chaperonin family. Heptamer of 7 subunits arranged in a ring. Interacts with the chaperonin GroEL.

It is found in the cytoplasm. Its function is as follows. Together with the chaperonin GroEL, plays an essential role in assisting protein folding. The GroEL-GroES system forms a nano-cage that allows encapsulation of the non-native substrate proteins and provides a physical environment optimized to promote and accelerate protein folding. GroES binds to the apical surface of the GroEL ring, thereby capping the opening of the GroEL channel. In Vibrio atlanticus (strain LGP32) (Vibrio splendidus (strain Mel32)), this protein is Co-chaperonin GroES.